Consider the following 77-residue polypeptide: Protein AC43 (77 aa).

Its function is as follows. Plays a role in the production of occlusion bodies as well as expression of the polyhedrin gene. The polypeptide is Protein AC43 (Autographa californica nuclear polyhedrosis virus (AcMNPV)).